We begin with the raw amino-acid sequence, 185 residues long: Adenylate kinase (185 aa).

An ATP-binding site is contributed by 8–16 (GIPGSGSTT).

The protein belongs to the archaeal adenylate kinase family.

The protein localises to the cytoplasm. The catalysed reaction is AMP + ATP = 2 ADP. The protein is Adenylate kinase (adkA) of Methanothermobacter thermautotrophicus (strain ATCC 29096 / DSM 1053 / JCM 10044 / NBRC 100330 / Delta H) (Methanobacterium thermoautotrophicum).